The sequence spans 391 residues: Winged helix repair factor 1 (391 aa).

Low complexity-rich tracts occupy residues 1-24 (MNIK…PSPI) and 49-63 (LSFN…SNIN). The interval 1–95 (MNIKRNQNNS…SITTTTATST (95 aa)) is disordered. Residues 64–74 (GEEDNDDDDRE) are compositionally biased toward acidic residues. Residues 82–95 (NPNPSITTTTATST) are compositionally biased toward low complexity.

It belongs to the STK19 family.

The protein localises to the nucleus. Its function is as follows. DNA-binding protein which is required for efficient transcription-coupled nucleotide excision repair. The protein is Winged helix repair factor 1 of Dictyostelium discoideum (Social amoeba).